Reading from the N-terminus, the 186-residue chain is ATP synthase subunit b 3 (186 aa).

The helical transmembrane segment at 5 to 25 threads the bilayer; it reads LLPALLTFSATPALAAKGPFF.

The protein belongs to the ATPase B chain family. In terms of assembly, F-type ATPases have 2 components, F(1) - the catalytic core - and F(0) - the membrane proton channel. F(1) has five subunits: alpha(3), beta(3), gamma(1), delta(1), epsilon(1). F(0) has three main subunits: a(1), b(2) and c(10-14). The alpha and beta chains form an alternating ring which encloses part of the gamma chain. F(1) is attached to F(0) by a central stalk formed by the gamma and epsilon chains, while a peripheral stalk is formed by the delta and b chains.

It localises to the cell inner membrane. F(1)F(0) ATP synthase produces ATP from ADP in the presence of a proton or sodium gradient. F-type ATPases consist of two structural domains, F(1) containing the extramembraneous catalytic core and F(0) containing the membrane proton channel, linked together by a central stalk and a peripheral stalk. During catalysis, ATP synthesis in the catalytic domain of F(1) is coupled via a rotary mechanism of the central stalk subunits to proton translocation. Its function is as follows. Component of the F(0) channel, it forms part of the peripheral stalk, linking F(1) to F(0). The sequence is that of ATP synthase subunit b 3 from Dinoroseobacter shibae (strain DSM 16493 / NCIMB 14021 / DFL 12).